Reading from the N-terminus, the 192-residue chain is MMTCPSVPAIPTLWLFSILLLVVSLNAQNKSWDNPICTEGILSVPRGNPAVMTCNISNTFTDVTIQLSANGKDKTIFDKKPQGNFSWRGWELQVQGGQAQLVIKDTQDDHTGIYLWQLHGRQRCYKNITLNILEPSNEDKVPDTTLFTSFPDHAKSSPIEGKPGTLVGVITVIFILGVAGFITFIYYRHRRS.

The signal sequence occupies residues 1–27; it reads MMTCPSVPAIPTLWLFSILLLVVSLNA. Over 28–165 the chain is Extracellular; the sequence is QNKSWDNPIC…SSPIEGKPGT (138 aa). N-linked (GlcNAc...) asparagine glycosylation is found at asparagine 29, asparagine 55, asparagine 84, and asparagine 127. The chain crosses the membrane as a helical span at residues 166-186; sequence LVGVITVIFILGVAGFITFIY. Residues 187–192 lie on the Cytoplasmic side of the membrane; that stretch reads YRHRRS.

Belongs to the SECTM family.

It localises to the cell membrane. Its subcellular location is the secreted. The protein is Secreted and transmembrane protein 1A of Mus musculus (Mouse).